The chain runs to 291 residues: Putative fatty acid elongase 4 (291 aa).

Helical transmembrane passes span 46-66 (ILFQ…FILI), 79-99 (FTLK…SIIA), and 254-274 (NLYL…QFFV).

The protein belongs to the ELO family.

It is found in the membrane. It carries out the reaction a very-long-chain acyl-CoA + malonyl-CoA + H(+) = a very-long-chain 3-oxoacyl-CoA + CO2 + CoA. Its pathway is lipid metabolism; fatty acid biosynthesis. Could be implicated in synthesis of very long chain fatty acids. This is Putative fatty acid elongase 4 (elo-4) from Caenorhabditis elegans.